The chain runs to 131 residues: Hypocretin neuropeptide precursor (131 aa).

Pyrrolidone carboxylic acid is present on Gln-34. 2 disulfides stabilise this stretch: Cys-39-Cys-45 and Cys-40-Cys-47. Leu-66 carries the leucine amide modification. The tract at residues 104 to 131 is disordered; that stretch reads EPALRPCSGRRCPSEAASSVAPGGRSGV.

Belongs to the orexin family.

It localises to the rough endoplasmic reticulum. The protein resides in the cytoplasmic vesicle. The protein localises to the synapse. In terms of biological role, neuropeptides that play a significant role in the regulation of food intake and sleep-wakefulness, possibly by coordinating the complex behavioral and physiologic responses of these complementary homeostatic functions. A broader role in the homeostatic regulation of energy metabolism, autonomic function, hormonal balance and the regulation of body fluids, is also suggested. Functionally, binds to orexin receptors HCRTR1/OX1R and HCRTR2/OX2R with a high affinity. Stimulates food intake. Modulates pituitary luteinizing hormone secretion in an ovarian steroid-dependent manner. Binds to orexin receptor HCRTR2/OX2R only. Stimulates food intake. Modulates pituitary luteinizing hormone secretion in an ovarian steroid-dependent manner. The chain is Hypocretin neuropeptide precursor (HCRT) from Bos taurus (Bovine).